The sequence spans 201 residues: Small ribosomal subunit protein uS4c (201 aa).

The segment at Arg-14 to Gln-43 is disordered. Positions Met-89–Leu-169 constitute an S4 RNA-binding domain.

This sequence belongs to the universal ribosomal protein uS4 family. In terms of assembly, part of the 30S ribosomal subunit. Contacts protein S5. The interaction surface between S4 and S5 is involved in control of translational fidelity.

The protein localises to the plastid. Its subcellular location is the chloroplast. One of the primary rRNA binding proteins, it binds directly to 16S rRNA where it nucleates assembly of the body of the 30S subunit. Its function is as follows. With S5 and S12 plays an important role in translational accuracy. This Gossypium hirsutum (Upland cotton) protein is Small ribosomal subunit protein uS4c (rps4).